Consider the following 218-residue polypeptide: Glycerol-3-phosphate acyltransferase (218 aa).

5 helical membrane passes run 4-24 (IALGMIIFAYLCGSISSAILI), 54-74 (TAAIVLICDVLKGMIPVWLAY), 80-100 (PFYLGITAIAACLGHIYPIFF), 107-127 (GVATAFGAIAAIGWDLTGLMM), and 130-150 (WLLTILLSGYSSLGAIVSALI).

Belongs to the PlsY family. As to quaternary structure, probably interacts with PlsX.

It localises to the cell inner membrane. The enzyme catalyses an acyl phosphate + sn-glycerol 3-phosphate = a 1-acyl-sn-glycero-3-phosphate + phosphate. It participates in lipid metabolism; phospholipid metabolism. Its function is as follows. Catalyzes the transfer of an acyl group from acyl-phosphate (acyl-PO(4)) to glycerol-3-phosphate (G3P) to form lysophosphatidic acid (LPA). This enzyme utilizes acyl-phosphate as fatty acyl donor, but not acyl-CoA or acyl-ACP. The sequence is that of Glycerol-3-phosphate acyltransferase from Photorhabdus laumondii subsp. laumondii (strain DSM 15139 / CIP 105565 / TT01) (Photorhabdus luminescens subsp. laumondii).